The sequence spans 238 residues: Bacterial microcompartment shell protein PduB (238 aa).

BMC circularly permuted domains are found at residues 14 to 125 (FVGA…VYNA) and 126 to 225 (KAGH…LSQF). The cysteines at positions 158 and 197 are disulfide-linked.

The protein belongs to the EutL/PduB family. As to quaternary structure, homotrimerizes to form a pseudohexamer with a central pore 7.5 Angstroms wide and 22 Angstroms long; the pore channel in the crystal binds up to 4 glycerol molecules. A disulfide bond forms in the pore, it is not clear if this is an artifact. The trimers pack into an array.

The protein localises to the bacterial microcompartment. It functions in the pathway polyol metabolism; 1,2-propanediol degradation. Functionally, one of the major shell proteins of the bacterial microcompartment (BMC) dedicated to 1,2-propanediol (1,2-PD) degradation. Probably involved in a propanediol fermentation/reuterin formation pathway. This Limosilactobacillus reuteri (strain DSM 20016) (Lactobacillus reuteri) protein is Bacterial microcompartment shell protein PduB.